The primary structure comprises 269 residues: 3-methyl-2-oxobutanoate hydroxymethyltransferase (269 aa).

The Mg(2+) site is built by Asp-43 and Asp-82. 3-methyl-2-oxobutanoate contacts are provided by residues 43-44 (DS), Asp-82, and Lys-110. Glu-112 lines the Mg(2+) pocket. Glu-179 functions as the Proton acceptor in the catalytic mechanism.

This sequence belongs to the PanB family. Homodecamer; pentamer of dimers. The cofactor is Mg(2+).

The protein resides in the cytoplasm. The catalysed reaction is 3-methyl-2-oxobutanoate + (6R)-5,10-methylene-5,6,7,8-tetrahydrofolate + H2O = 2-dehydropantoate + (6S)-5,6,7,8-tetrahydrofolate. It participates in cofactor biosynthesis; (R)-pantothenate biosynthesis; (R)-pantoate from 3-methyl-2-oxobutanoate: step 1/2. In terms of biological role, catalyzes the reversible reaction in which hydroxymethyl group from 5,10-methylenetetrahydrofolate is transferred onto alpha-ketoisovalerate to form ketopantoate. This is 3-methyl-2-oxobutanoate hydroxymethyltransferase from Acinetobacter baumannii (strain SDF).